Consider the following 479-residue polypeptide: F-box protein SKIP17 (479 aa).

Residues 92-138 form the F-box domain; it reads NSNSWSLPPELTIKVFSMLDTKSMMQAAVCCTMFNKCAMDRLCYSHI. A disordered region spans residues 435 to 479; that stretch reads EMMEAEDDEVDEEDDSDDDTDDVSDEDESENDDDMGMGFDVDYLL. Acidic residues predominate over residues 437-469; that stretch reads MEAEDDEVDEEDDSDDDTDDVSDEDESENDDDM.

As to quaternary structure, part of a SCF (ASK-cullin-F-box) protein ligase complex. Interacts with SPK1B/ASK2.

It is found in the nucleus. It participates in protein modification; protein ubiquitination. Functionally, component of SCF(ASK-cullin-F-box) E3 ubiquitin ligase complexes, which may mediate the ubiquitination and subsequent proteasomal degradation of target proteins. This chain is F-box protein SKIP17 (SKIP17), found in Arabidopsis thaliana (Mouse-ear cress).